The chain runs to 275 residues: NH(3)-dependent NAD(+) synthetase (275 aa).

Position 46–53 (46–53 (GISGGQDS)) interacts with ATP. Mg(2+) is bound at residue D52. R140 provides a ligand contact to deamido-NAD(+). T160 serves as a coordination point for ATP. Residue E165 coordinates Mg(2+). K173 and D180 together coordinate deamido-NAD(+). Residues K189 and T211 each coordinate ATP. Residue 260-261 (HK) participates in deamido-NAD(+) binding.

Belongs to the NAD synthetase family. Homodimer.

The enzyme catalyses deamido-NAD(+) + NH4(+) + ATP = AMP + diphosphate + NAD(+) + H(+). The protein operates within cofactor biosynthesis; NAD(+) biosynthesis; NAD(+) from deamido-NAD(+) (ammonia route): step 1/1. Functionally, catalyzes the ATP-dependent amidation of deamido-NAD to form NAD. Uses ammonia as a nitrogen source. The polypeptide is NH(3)-dependent NAD(+) synthetase (Salmonella paratyphi A (strain ATCC 9150 / SARB42)).